The chain runs to 503 residues: MEAAVAAPRPRLLLLVLAAAAAAAAALLPGATALQCFCHLCTKDNFTCVTDGLCFVSVTETTDKVIHNSMCIAEIDLIPRDRPFVCAPSSKTGSVTTTYCCNQDHCNKIELPTTVKSSPGLGPVELAAVIAGPVCFVCISLMLMVYICHNRTVIHHRVPNEEDPSLDRPFISEGTTLKDLIYDMTTSGSGSGLPLLVQRTIARTIVLQESIGKGRFGEVWRGKWRGEEVAVKIFSSREERSWFREAEIYQTVMLRHENILGFIAADNKDNGTWTQLWLVSDYHEHGSLFDYLNRYTVTVEGMIKLALSTASGLAHLHMEIVGTQGKPAIAHRDLKSKNILVKKNGTCCIADLGLAVRHDSATDTIDIAPNHRVGTKRYMAPEVLDDSINMKHFESFKRADIYAMGLVFWEIARRCSIGGIHEDYQLPYYDLVPSDPSVEEMRKVVCEQKLRPNIPNRWQSCEALRVMAKIMRECWYANGAARLTALRIKKTLSQLSQQEGIKM.

An N-terminal signal peptide occupies residues 1-33 (MEAAVAAPRPRLLLLVLAAAAAAAAALLPGATA). At 34–126 (LQCFCHLCTK…SSPGLGPVEL (93 aa)) the chain is on the extracellular side. 5 cysteine pairs are disulfide-bonded: Cys36–Cys54, Cys38–Cys41, Cys48–Cys71, Cys86–Cys100, and Cys101–Cys106. Asn45 carries an N-linked (GlcNAc...) asparagine glycan. Residues 127-147 (AAVIAGPVCFVCISLMLMVYI) form a helical membrane-spanning segment. Residues 148–503 (CHNRTVIHHR…QLSQQEGIKM (356 aa)) are Cytoplasmic-facing. Phosphoserine is present on Ser165. One can recognise a GS domain in the interval 175–204 (TTLKDLIYDMTTSGSGSGLPLLVQRTIART). 2 positions are modified to phosphothreonine; by TGFBR2: Thr185 and Thr186. Phosphoserine; by TGFBR2 occurs at positions 187, 189, and 191. An FKBP1A-binding motif is present at residues 193–194 (LP). Residues 205–495 (IVLQESIGKG…LRIKKTLSQL (291 aa)) enclose the Protein kinase domain. ATP-binding positions include 211-219 (IGKGRFGEV) and Lys232. A Glycyl lysine isopeptide (Lys-Gly) (interchain with G-Cter in ubiquitin) cross-link involves residue Lys268. Residue Asp333 is the Proton acceptor of the active site. Lys391 is covalently cross-linked (Glycyl lysine isopeptide (Lys-Gly) (interchain with G-Cter in SUMO)).

Belongs to the protein kinase superfamily. TKL Ser/Thr protein kinase family. TGFB receptor subfamily. Homodimer; in the endoplasmic reticulum but also at the cell membrane. Heterohexamer; TGFB1, TGFB2 and TGFB3 homodimeric ligands assemble a functional receptor composed of two TGFBR1 and TGFBR2 heterodimers to form a ligand-receptor heterohexamer. The respective affinity of TGBRB1 and TGFBR2 for the ligands may modulate the kinetics of assembly of the receptor and may explain the different biological activities of TGFB1, TGFB2 and TGFB3. Component of a complex composed of TSC22D1 (via N-terminus), TGFBR1 and TGFBR2; the interaction between TSC22D1 and TGFBR1 is inhibited by SMAD7 and promoted by TGFB1. Interacts with CD109; inhibits TGF-beta receptor activation in keratinocytes. Interacts with RBPMS. Interacts (unphosphorylated) with FKBP1A; prevents TGFBR1 phosphorylation by TGFBR2 and stabilizes it in the inactive conformation. Interacts with SMAD2, SMAD3 and ZFYVE9; ZFYVE9 recruits SMAD2 and SMAD3 to the TGF-beta receptor. Interacts with TRAF6 and MAP3K7; induces MAP3K7 activation by TRAF6. Interacts with PARD6A; involved in TGF-beta induced epithelial to mesenchymal transition. Interacts with NEDD4L. Interacts with SMAD7, SMURF1 and SMURF2; SMAD7 recruits NEDD4L, SMURF1 and SMURF2 to the TGF-beta receptor. Interacts with USP15 and VPS39. Interacts with SDCBP (via C-terminus). Interacts with CAV1 and this interaction is impaired in the presence of SDCBP. Interacts with APPL1; interaction is TGF beta dependent; mediates trafficking of the TGFBR1 from the endosomes to the nucleus via microtubules in a TRAF6-dependent manner. Interacts with GPR50; this interaction promotes the constitutive activation of SMAD signaling pathway. The cofactor is Mg(2+). Mn(2+) is required as a cofactor. Phosphorylated at basal levels in the absence of ligand. Activated upon phosphorylation by TGFBR2, mainly in the GS domain. Phosphorylation in the GS domain abrogates FKBP1A-binding. Post-translationally, N-Glycosylated. In terms of processing, ubiquitinated; undergoes ubiquitination catalyzed by several E3 ubiquitin ligases including SMURF1, SMURF2 and NEDD4L2. Results in the proteasomal and/or lysosomal degradation of the receptor thereby negatively regulating its activity. Deubiquitinated by USP15, leading to stabilization of the protein and enhanced TGF-beta signal. Its ubiquitination and proteasome-mediated degradation is negatively regulated by SDCBP. Ubiquitinated by BFAR via'Lys-63'-linked ubiquitination at Lys-268, leading to TGF-beta signaling activation. Found in all tissues examined, most abundant in placenta and least abundant in brain and heart. Expressed in a variety of cancer cell lines.

The protein localises to the cell membrane. It is found in the cell junction. The protein resides in the tight junction. It localises to the cell surface. Its subcellular location is the membrane raft. The catalysed reaction is L-threonyl-[receptor-protein] + ATP = O-phospho-L-threonyl-[receptor-protein] + ADP + H(+). It carries out the reaction L-seryl-[receptor-protein] + ATP = O-phospho-L-seryl-[receptor-protein] + ADP + H(+). Kept in an inactive conformation by FKBP1A preventing receptor activation in absence of ligand. CD109 is another inhibitor of the receptor. Transmembrane serine/threonine kinase forming with the TGF-beta type II serine/threonine kinase receptor, TGFBR2, the non-promiscuous receptor for the TGF-beta cytokines TGFB1, TGFB2 and TGFB3. Transduces the TGFB1, TGFB2 and TGFB3 signal from the cell surface to the cytoplasm and is thus regulating a plethora of physiological and pathological processes including cell cycle arrest in epithelial and hematopoietic cells, control of mesenchymal cell proliferation and differentiation, wound healing, extracellular matrix production, immunosuppression and carcinogenesis. The formation of the receptor complex composed of 2 TGFBR1 and 2 TGFBR2 molecules symmetrically bound to the cytokine dimer results in the phosphorylation and the activation of TGFBR1 by the constitutively active TGFBR2. Activated TGFBR1 phosphorylates SMAD2 which dissociates from the receptor and interacts with SMAD4. The SMAD2-SMAD4 complex is subsequently translocated to the nucleus where it modulates the transcription of the TGF-beta-regulated genes. This constitutes the canonical SMAD-dependent TGF-beta signaling cascade. Also involved in non-canonical, SMAD-independent TGF-beta signaling pathways. For instance, TGFBR1 induces TRAF6 autoubiquitination which in turn results in MAP3K7 ubiquitination and activation to trigger apoptosis. Also regulates epithelial to mesenchymal transition through a SMAD-independent signaling pathway through PARD6A phosphorylation and activation. This Homo sapiens (Human) protein is TGF-beta receptor type-1 (TGFBR1).